The chain runs to 76 residues: Conotoxin Bu28 (76 aa).

An N-terminal signal peptide occupies residues 1–24 (MTSVQSATCCCLLWLVLCVQLVTP). A propeptide spanning residues 25–39 (DSPATAQLSRHLTAR) is cleaved from the precursor. Cystine bridges form between C50–C63 and C54–C65. An Arginine amide modification is found at R69. The propeptide occupies 71–76 (VVSSSI).

Belongs to the conotoxin J superfamily. In terms of tissue distribution, expressed by the venom duct.

It localises to the secreted. Functionally, highly inhibits both nicotinic acetylcholine receptors (neuronal (alpha-3/beta-4) and muscular (alpha-1/beta-1/epsilon/delta) subtypes) and the voltage-gated potassium channel Kv1.6/KCNA6 subtype. This Conus bullatus (Bubble cone) protein is Conotoxin Bu28.